The following is a 364-amino-acid chain: Dihydroorotate dehydrogenase (quinone) (364 aa).

Residues 61 to 65 (AGFDK) and Thr-85 contribute to the FMN site. Residue Lys-65 coordinates substrate. 110–114 (NRMGF) is a binding site for substrate. FMN-binding residues include Asn-139 and Asn-170. Asn-170 lines the substrate pocket. Catalysis depends on Ser-173, which acts as the Nucleophile. Position 175 (Asn-175) interacts with substrate. 2 residues coordinate FMN: Lys-214 and Ala-242. Residue 243–244 (NT) coordinates substrate. FMN contacts are provided by residues Gly-266, Gly-295, and 316–317 (YS).

Belongs to the dihydroorotate dehydrogenase family. Type 2 subfamily. In terms of assembly, monomer. Requires FMN as cofactor.

It is found in the cell membrane. It catalyses the reaction (S)-dihydroorotate + a quinone = orotate + a quinol. Its pathway is pyrimidine metabolism; UMP biosynthesis via de novo pathway; orotate from (S)-dihydroorotate (quinone route): step 1/1. Its function is as follows. Catalyzes the conversion of dihydroorotate to orotate with quinone as electron acceptor. The sequence is that of Dihydroorotate dehydrogenase (quinone) from Rhodopseudomonas palustris (strain ATCC BAA-98 / CGA009).